A 304-amino-acid polypeptide reads, in one-letter code: Oxygen-dependent coproporphyrinogen-III oxidase (304 aa).

Residue serine 94 coordinates substrate. Residues histidine 98 and histidine 108 each contribute to the a divalent metal cation site. Residue histidine 108 is the Proton donor of the active site. 110 to 112 (NVR) contacts substrate. Histidine 147 and histidine 177 together coordinate a divalent metal cation. Residues 242–277 (YVEFNLVYDRGTLFGLQTGGRTESILMSMPPLVRWE) are important for dimerization. 260–262 (GGR) is a substrate binding site.

It belongs to the aerobic coproporphyrinogen-III oxidase family. In terms of assembly, homodimer. Requires a divalent metal cation as cofactor.

The protein localises to the cytoplasm. It catalyses the reaction coproporphyrinogen III + O2 + 2 H(+) = protoporphyrinogen IX + 2 CO2 + 2 H2O. The protein operates within porphyrin-containing compound metabolism; protoporphyrin-IX biosynthesis; protoporphyrinogen-IX from coproporphyrinogen-III (O2 route): step 1/1. Its function is as follows. Involved in the heme biosynthesis. Catalyzes the aerobic oxidative decarboxylation of propionate groups of rings A and B of coproporphyrinogen-III to yield the vinyl groups in protoporphyrinogen-IX. The chain is Oxygen-dependent coproporphyrinogen-III oxidase from Shewanella pealeana (strain ATCC 700345 / ANG-SQ1).